Consider the following 63-residue polypeptide: Large ribosomal subunit protein uL29 (63 aa).

Belongs to the universal ribosomal protein uL29 family.

This Vibrio cholerae serotype O1 (strain ATCC 39541 / Classical Ogawa 395 / O395) protein is Large ribosomal subunit protein uL29.